The following is a 597-amino-acid chain: Aspartate--tRNA ligase (597 aa).

Residue glutamate 180 coordinates L-aspartate. Residues 204–207 (QLFK) are aspartate. Arginine 226 contributes to the L-aspartate binding site. ATP is bound by residues 226–228 (RDE) and glutamine 235. L-aspartate is bound at residue histidine 454. An ATP-binding site is contributed by glutamate 488. Arginine 495 is an L-aspartate binding site. 540–543 (GLDR) serves as a coordination point for ATP.

The protein belongs to the class-II aminoacyl-tRNA synthetase family. Type 1 subfamily. Homodimer.

Its subcellular location is the cytoplasm. It carries out the reaction tRNA(Asp) + L-aspartate + ATP = L-aspartyl-tRNA(Asp) + AMP + diphosphate. Catalyzes the attachment of L-aspartate to tRNA(Asp) in a two-step reaction: L-aspartate is first activated by ATP to form Asp-AMP and then transferred to the acceptor end of tRNA(Asp). This chain is Aspartate--tRNA ligase, found in Clostridium perfringens (strain SM101 / Type A).